Consider the following 136-residue polypeptide: Large ribosomal subunit protein uL16 (136 aa).

It belongs to the universal ribosomal protein uL16 family. Part of the 50S ribosomal subunit.

Functionally, binds 23S rRNA and is also seen to make contacts with the A and possibly P site tRNAs. The sequence is that of Large ribosomal subunit protein uL16 from Shewanella woodyi (strain ATCC 51908 / MS32).